The sequence spans 604 residues: UvrABC system protein C (604 aa).

In terms of domain architecture, GIY-YIG spans 12–90; that stretch reads TAPGVYLMRD…IKQHQPRYNL (79 aa). The UVR domain maps to 200–235; that stretch reads KDLVSGFRQRMKEAAEGLHYEEAARWRDLLKAIDTT.

It belongs to the UvrC family. As to quaternary structure, interacts with UvrB in an incision complex.

It is found in the cytoplasm. In terms of biological role, the UvrABC repair system catalyzes the recognition and processing of DNA lesions. UvrC both incises the 5' and 3' sides of the lesion. The N-terminal half is responsible for the 3' incision and the C-terminal half is responsible for the 5' incision. The protein is UvrABC system protein C of Trichlorobacter lovleyi (strain ATCC BAA-1151 / DSM 17278 / SZ) (Geobacter lovleyi).